A 424-amino-acid chain; its full sequence is GTPase Obg (424 aa).

An Obg domain is found at 2–158; it reads AKFIDQVKIM…YEANIVLKIL (157 aa). The region spanning 159-326 is the OBG-type G domain; that stretch reads SDVGLVGLPS…LKKIIWEFLE (168 aa). GTP contacts are provided by residues 165–172, 190–194, 211–214, 280–283, and 307–309; these read GLPSCGKS, FTTLV, DLPG, NKSD, and SAL. Mg(2+) contacts are provided by serine 172 and threonine 192. The region spanning 344–422 is the OCT domain; that stretch reads KEINYEPDFV…IYQHKFEWEE (79 aa).

This sequence belongs to the TRAFAC class OBG-HflX-like GTPase superfamily. OBG GTPase family. As to quaternary structure, monomer. It depends on Mg(2+) as a cofactor.

It is found in the cytoplasm. An essential GTPase which binds GTP, GDP and possibly (p)ppGpp with moderate affinity, with high nucleotide exchange rates and a fairly low GTP hydrolysis rate. Plays a role in control of the cell cycle, stress response, ribosome biogenesis and in those bacteria that undergo differentiation, in morphogenesis control. In Mycoplasmopsis synoviae (strain 53) (Mycoplasma synoviae), this protein is GTPase Obg.